Consider the following 72-residue polypeptide: Cytochrome c oxidase subunit 2 (72 aa).

Residues 1–14 lie on the Mitochondrial intermembrane side of the membrane; the sequence is MAHPSQLGFQDAAS. A helical transmembrane segment spans residues 15-45; the sequence is PVMEELLHFHDHALMIVFLISTLVLYIIVAM. The Mitochondrial matrix segment spans residues 46 to 72; that stretch reads VSTKLTNKHILDSQEVEIVWTILPAVI.

It belongs to the cytochrome c oxidase subunit 2 family. As to quaternary structure, component of the cytochrome c oxidase (complex IV, CIV), a multisubunit enzyme composed of 14 subunits. The complex is composed of a catalytic core of 3 subunits MT-CO1, MT-CO2 and MT-CO3, encoded in the mitochondrial DNA, and 11 supernumerary subunits COX4I, COX5A, COX5B, COX6A, COX6B, COX6C, COX7A, COX7B, COX7C, COX8 and NDUFA4, which are encoded in the nuclear genome. The complex exists as a monomer or a dimer and forms supercomplexes (SCs) in the inner mitochondrial membrane with NADH-ubiquinone oxidoreductase (complex I, CI) and ubiquinol-cytochrome c oxidoreductase (cytochrome b-c1 complex, complex III, CIII), resulting in different assemblies (supercomplex SCI(1)III(2)IV(1) and megacomplex MCI(2)III(2)IV(2)). Found in a complex with TMEM177, COA6, COX18, COX20, SCO1 and SCO2. Interacts with TMEM177 in a COX20-dependent manner. Interacts with COX20. Interacts with COX16. The cofactor is Cu cation.

The protein resides in the mitochondrion inner membrane. It carries out the reaction 4 Fe(II)-[cytochrome c] + O2 + 8 H(+)(in) = 4 Fe(III)-[cytochrome c] + 2 H2O + 4 H(+)(out). Its function is as follows. Component of the cytochrome c oxidase, the last enzyme in the mitochondrial electron transport chain which drives oxidative phosphorylation. The respiratory chain contains 3 multisubunit complexes succinate dehydrogenase (complex II, CII), ubiquinol-cytochrome c oxidoreductase (cytochrome b-c1 complex, complex III, CIII) and cytochrome c oxidase (complex IV, CIV), that cooperate to transfer electrons derived from NADH and succinate to molecular oxygen, creating an electrochemical gradient over the inner membrane that drives transmembrane transport and the ATP synthase. Cytochrome c oxidase is the component of the respiratory chain that catalyzes the reduction of oxygen to water. Electrons originating from reduced cytochrome c in the intermembrane space (IMS) are transferred via the dinuclear copper A center (CU(A)) of subunit 2 and heme A of subunit 1 to the active site in subunit 1, a binuclear center (BNC) formed by heme A3 and copper B (CU(B)). The BNC reduces molecular oxygen to 2 water molecules using 4 electrons from cytochrome c in the IMS and 4 protons from the mitochondrial matrix. This chain is Cytochrome c oxidase subunit 2 (mt-co2), found in Atractosteus spatula (Alligator gar).